Consider the following 373-residue polypeptide: Centrosomal protein of 41 kDa (373 aa).

The segment at 89 to 137 (QRLEDNDSAASDPDAETTARTNGKGNPGEQSPSPEQFINNAGAGDSSRS) is disordered. Residues Ser-96 and Ser-99 each carry the phosphoserine modification. Positions 106-127 (TARTNGKGNPGEQSPSPEQFIN) are enriched in polar residues. Position 109 is a phosphothreonine (Thr-109). Ser-121 carries the post-translational modification Phosphoserine. One can recognise a Rhodanese domain in the interval 169–266 (PDCPFLLLDV…LAQKFPEGLI (98 aa)). Residues 275–373 (QQALPPGSAR…SGHLQGKPWK (99 aa)) form a disordered region. Positions 298–312 (NKWRFTPEDLKKIEY) are enriched in basic and acidic residues. Arg-343 is subject to Omega-N-methylarginine. Residues 355–366 (SHSNPRSLSSGH) show a composition bias toward polar residues.

Belongs to the CEP41 family. As to quaternary structure, found in a complex with TTLL6. In terms of tissue distribution, expressed in testis and fetal tissues.

The protein resides in the cytoplasm. Its subcellular location is the cytoskeleton. It localises to the microtubule organizing center. It is found in the centrosome. The protein localises to the cell projection. The protein resides in the cilium. Its subcellular location is the cilium basal body. Functionally, required during ciliogenesis for tubulin glutamylation in cilium. Probably acts by participating in the transport of TTLL6, a tubulin polyglutamylase, between the basal body and the cilium. This chain is Centrosomal protein of 41 kDa (CEP41), found in Homo sapiens (Human).